We begin with the raw amino-acid sequence, 474 residues long: Probable multidrug resistance protein NorM (474 aa).

Helical transmembrane passes span leucine 33–methionine 50, valine 65–serine 87, serine 108–glycine 130, tyrosine 150–glycine 172, proline 179–glycine 201, phenylalanine 211–valine 233, leucine 258–alanine 280, glutamine 295–valine 317, alanine 334–threonine 356, threonine 376–alanine 398, valine 410–phenylalanine 432, and leucine 436–tryptophan 458.

The protein belongs to the multi antimicrobial extrusion (MATE) (TC 2.A.66.1) family.

The protein resides in the cell inner membrane. In terms of biological role, multidrug efflux pump. The chain is Probable multidrug resistance protein NorM (norM) from Rhodopseudomonas palustris (strain ATCC BAA-98 / CGA009).